The primary structure comprises 575 residues: Methionine--tRNA ligase, mitochondrial (575 aa).

The 'HIGH' region motif lies at 20–32 (PIFYPNAKPHLGH). The 'KMSKS' region signature appears at 341–345 (KMSKS). Lysine 344 is a binding site for ATP.

The protein belongs to the class-I aminoacyl-tRNA synthetase family.

It is found in the mitochondrion matrix. The enzyme catalyses tRNA(Met) + L-methionine + ATP = L-methionyl-tRNA(Met) + AMP + diphosphate. In terms of biological role, catalyzes the attachment of methionine to tRNA(Met) in the mitochondrion. This chain is Methionine--tRNA ligase, mitochondrial (MSM1), found in Saccharomyces cerevisiae (strain ATCC 204508 / S288c) (Baker's yeast).